The sequence spans 533 residues: MEALGFLKLEVNGPMVTVALSVALLALLKWYSTSAFSRLEKLGLRHPKPSPFIGNLMFFRQGFWESQMELRKLYGPLCGYYLGRRMFIVISEPDMIKQVLVENFSNFTNRMASGLEFKSVADSVLFLRDKRWEEVRGALMSAFSPEKLNEMTPLISQACDLLLAHLKRYAESGDAFDIQRCYRNYTTDVVASVAFGTPVDSQQAPEDPFVKHCKRFFEFCIPRPILVLLLSFPSIMVPLARILPNKNRDELNGFFNKLIRNVIALRDQQAAEERRRDFLQMVLDARHSASPVGVQDFDMVGDVFSSTRCKPNPSRQHQAGPMARPLTVDEIVGQAFIFLIAGYEIVTNTLSFATYLLATNPDCQEKLLREVDLFKEKHMVPEFCSLEEGLPYLDMVIAETLRMYPPAFRFTREAAQDCEVLGQRIPAGAVLEMAVGALHHDPEHWPSPETFNPERFTAEAQQQHRPFTYLPFGAGPRSCLGVRLGLLEVKLTLLHVLHKFQFQACPETQVPLQLESKSALGPKNGVYIKIVSR.

The Cytoplasmic segment spans residues 1-10; the sequence is MEALGFLKLE. The chain crosses the membrane as a helical span at residues 11–31; sequence VNGPMVTVALSVALLALLKWY. Residues 32–75 are Lumenal-facing; the sequence is STSAFSRLEKLGLRHPKPSPFIGNLMFFRQGFWESQMELRKLYG. A helical membrane pass occupies residues 76–96; sequence PLCGYYLGRRMFIVISEPDMI. Over 97-223 the chain is Cytoplasmic; that stretch reads KQVLVENFSN…KRFFEFCIPR (127 aa). The chain crosses the membrane as a helical span at residues 224-244; that stretch reads PILVLLLSFPSIMVPLARILP. The Lumenal portion of the chain corresponds to 245 to 335; the sequence is NKNRDELNGF…LTVDEIVGQA (91 aa). Residues 336–356 traverse the membrane as a helical segment; sequence FIFLIAGYEIVTNTLSFATYL. The Cytoplasmic segment spans residues 357-533; it reads LATNPDCQEK…NGVYIKIVSR (177 aa). A heme-binding site is contributed by C479.

This sequence belongs to the cytochrome P450 family. In terms of assembly, monomer. Requires heme as cofactor.

It localises to the endoplasmic reticulum membrane. The catalysed reaction is prostaglandin H2 = thromboxane A2. It carries out the reaction prostaglandin H2 = (12S)-hydroxy-(5Z,8E,10E)-heptadecatrienoate + malonaldehyde. It catalyses the reaction a hydroperoxyeicosatetraenoate = an oxoeicosatetraenoate + H2O. The enzyme catalyses (15S)-hydroperoxy-(5Z,8Z,11Z,13E)-eicosatetraenoate = 15-oxo-(5Z,8Z,11Z,13E)-eicosatetraenoate + H2O. The catalysed reaction is (15S)-hydroperoxy-(5Z,8Z,11Z,13E)-eicosatetraenoate + AH2 = (15S)-hydroxy-(5Z,8Z,11Z,13E)-eicosatetraenoate + A + H2O. In terms of biological role, catalyzes the conversion of prostaglandin H2 (PGH2) to thromboxane A2 (TXA2), a potent inducer of blood vessel constriction and platelet aggregation. Also cleaves PGH2 to 12-hydroxy-heptadecatrienoicacid (12-HHT) and malondialdehyde, which is known to act as a mediator of DNA damage. 12-HHT and malondialdehyde are formed stoichiometrically in the same amounts as TXA2. Additionally, displays dehydratase activity, toward (15S)-hydroperoxy-(5Z,8Z,11Z,13E)-eicosatetraenoate (15(S)-HPETE) producing 15-KETE and 15-HETE. The polypeptide is Thromboxane-A synthase (TBXAS1) (Macaca fascicularis (Crab-eating macaque)).